We begin with the raw amino-acid sequence, 228 residues long: 2,3-bisphosphoglycerate-dependent phosphoglycerate mutase (228 aa).

Substrate is bound by residues 8 to 15 (RHGQSVWN), 21 to 22 (TG), R60, 87 to 90 (ERHY), K98, 114 to 115 (RR), and 183 to 184 (GN). H9 (tele-phosphohistidine intermediate) is an active-site residue. E87 acts as the Proton donor/acceptor in catalysis.

This sequence belongs to the phosphoglycerate mutase family. BPG-dependent PGAM subfamily.

It carries out the reaction (2R)-2-phosphoglycerate = (2R)-3-phosphoglycerate. It functions in the pathway carbohydrate degradation; glycolysis; pyruvate from D-glyceraldehyde 3-phosphate: step 3/5. Functionally, catalyzes the interconversion of 2-phosphoglycerate and 3-phosphoglycerate. The protein is 2,3-bisphosphoglycerate-dependent phosphoglycerate mutase of Staphylococcus carnosus (strain TM300).